A 42-amino-acid polypeptide reads, in one-letter code: Conotoxin Au11.6 (42 aa).

4 disulfides stabilise this stretch: C6–C20, C13–C25, C19–C30, and C24–C37.

The protein belongs to the conotoxin I1 superfamily. Expressed by the venom duct.

The protein resides in the secreted. The sequence is that of Conotoxin Au11.6 from Conus aulicus (Princely cone).